Reading from the N-terminus, the 274-residue chain is MQGTPAKKHTHGWQASLALQFCHTPEKTVLHSARHVGPLTVQRPFYPEEETCHLYLLHPPGGIVGGDELNISVQLDPNSHALITMPGAGKFYRSSGPLARLNQHFFLEENATLEWLPQDTIFFPGANAVLQSVFHLHHSSRLLAWELFCLGRPVINETFSHGTIESRLEVWLDDEPLLIERQHLADGDLTTVANHPWIGTLLCYPASDALLEGVREKLVTLDNFAGATLTDGLLSIRFLSHDNLICQRAMREIWQCLRPHVIAKTPHPPRIWQT.

Belongs to the UreD family. UreD, UreF and UreG form a complex that acts as a GTP-hydrolysis-dependent molecular chaperone, activating the urease apoprotein by helping to assemble the nickel containing metallocenter of UreC. The UreE protein probably delivers the nickel.

The protein resides in the cytoplasm. Functionally, required for maturation of urease via the functional incorporation of the urease nickel metallocenter. This is Urease accessory protein UreD from Enterobacter sp. (strain 638).